Here is a 582-residue protein sequence, read N- to C-terminus: Arginine--tRNA ligase (582 aa).

The short motif at proline 128–histidine 138 is the 'HIGH' region element.

This sequence belongs to the class-I aminoacyl-tRNA synthetase family. In terms of assembly, monomer.

It is found in the cytoplasm. The catalysed reaction is tRNA(Arg) + L-arginine + ATP = L-arginyl-tRNA(Arg) + AMP + diphosphate. This chain is Arginine--tRNA ligase, found in Colwellia psychrerythraea (strain 34H / ATCC BAA-681) (Vibrio psychroerythus).